A 335-amino-acid chain; its full sequence is 4-hydroxythreonine-4-phosphate dehydrogenase (335 aa).

Threonine 132 serves as a coordination point for substrate. The a divalent metal cation site is built by histidine 163, histidine 208, and histidine 263. The substrate site is built by lysine 271, asparagine 280, and arginine 289.

Belongs to the PdxA family. Homodimer. Requires Zn(2+) as cofactor. Mg(2+) is required as a cofactor. The cofactor is Co(2+).

It localises to the cytoplasm. It catalyses the reaction 4-(phosphooxy)-L-threonine + NAD(+) = 3-amino-2-oxopropyl phosphate + CO2 + NADH. It participates in cofactor biosynthesis; pyridoxine 5'-phosphate biosynthesis; pyridoxine 5'-phosphate from D-erythrose 4-phosphate: step 4/5. Its function is as follows. Catalyzes the NAD(P)-dependent oxidation of 4-(phosphooxy)-L-threonine (HTP) into 2-amino-3-oxo-4-(phosphooxy)butyric acid which spontaneously decarboxylates to form 3-amino-2-oxopropyl phosphate (AHAP). This Zymomonas mobilis subsp. mobilis (strain ATCC 31821 / ZM4 / CP4) protein is 4-hydroxythreonine-4-phosphate dehydrogenase.